The primary structure comprises 101 residues: Urease subunit beta (101 aa).

Belongs to the urease beta subunit family. Heterotrimer of UreA (gamma), UreB (beta) and UreC (alpha) subunits. Three heterotrimers associate to form the active enzyme.

The protein resides in the cytoplasm. The enzyme catalyses urea + 2 H2O + H(+) = hydrogencarbonate + 2 NH4(+). It participates in nitrogen metabolism; urea degradation; CO(2) and NH(3) from urea (urease route): step 1/1. The sequence is that of Urease subunit beta from Verminephrobacter eiseniae (strain EF01-2).